The sequence spans 120 residues: Large ribosomal subunit protein uL18 (120 aa).

Belongs to the universal ribosomal protein uL18 family. Part of the 50S ribosomal subunit; part of the 5S rRNA/L5/L18/L25 subcomplex. Contacts the 5S and 23S rRNAs.

In terms of biological role, this is one of the proteins that bind and probably mediate the attachment of the 5S RNA into the large ribosomal subunit, where it forms part of the central protuberance. The chain is Large ribosomal subunit protein uL18 from Treponema denticola (strain ATCC 35405 / DSM 14222 / CIP 103919 / JCM 8153 / KCTC 15104).